Here is a 342-residue protein sequence, read N- to C-terminus: Erlin-1 (342 aa).

The Cytoplasmic portion of the chain corresponds to methionine 1–alanine 6. A helical transmembrane segment spans residues valine 7–isoleucine 23. The Lumenal portion of the chain corresponds to histidine 24–histidine 342. An N-linked (GlcNAc...) asparagine glycan is attached at asparagine 106. The disordered stretch occupies residues serine 308–histidine 342.

The protein belongs to the band 7/mec-2 family.

Its subcellular location is the endoplasmic reticulum membrane. Its function is as follows. Mediates the endoplasmic reticulum-associated degradation (ERAD) of inositol 1,4,5-trisphosphate receptors (IP3Rs). Involved in regulation of cellular cholesterol homeostasis by regulation the SREBP signaling pathway. Binds cholesterol and may promote ER retention of the SCAP-SREBF complex. The polypeptide is Erlin-1 (Danio rerio (Zebrafish)).